A 210-amino-acid polypeptide reads, in one-letter code: N-(5'-phosphoribosyl)anthranilate isomerase (210 aa).

The protein belongs to the TrpF family.

The catalysed reaction is N-(5-phospho-beta-D-ribosyl)anthranilate = 1-(2-carboxyphenylamino)-1-deoxy-D-ribulose 5-phosphate. The protein operates within amino-acid biosynthesis; L-tryptophan biosynthesis; L-tryptophan from chorismate: step 3/5. The chain is N-(5'-phosphoribosyl)anthranilate isomerase from Staphylococcus aureus (strain Mu3 / ATCC 700698).